The primary structure comprises 309 residues: Mitochondrial glycine transporter (309 aa).

Solcar repeat units follow at residues 2 to 94 (SNVG…LRAL), 124 to 207 (LTSQ…IKHE), and 219 to 304 (QATL…GLML). 6 consecutive transmembrane segments (helical) span residues 8–33 (LLSG…TRLQ), 69–95 (GTTP…RALM), 130–155 (LIAG…ARFE), 182–205 (GFLA…EGIK), 223–249 (IHGL…KTKI), and 279–297 (GASL…GWAV).

The protein belongs to the mitochondrial carrier (TC 2.A.29) family. SLC25A38 subfamily.

The protein resides in the mitochondrion inner membrane. It catalyses the reaction glycine(in) = glycine(out). In terms of biological role, mitochondrial glycine transporter that imports glycine into the mitochondrial matrix. Plays an important role in providing glycine for the first enzymatic step in heme biosynthesis, the condensation of glycine with succinyl-CoA to produce 5-aminolevulinate (ALA) in the mitochondrial matrix. This chain is Mitochondrial glycine transporter, found in Laccaria bicolor (strain S238N-H82 / ATCC MYA-4686) (Bicoloured deceiver).